The following is a 751-amino-acid chain: Catalase-peroxidase 2 (751 aa).

Positions Met-1–Ala-27 are cleaved as a signal peptide. The segment at residues Trp-115 to Tyr-238 is a cross-link (tryptophyl-tyrosyl-methioninium (Trp-Tyr) (with M-264)). The active-site Proton acceptor is His-116. The segment at residues Tyr-238–Met-264 is a cross-link (tryptophyl-tyrosyl-methioninium (Tyr-Met) (with W-115)). His-279 lines the heme b pocket.

It belongs to the peroxidase family. Peroxidase/catalase subfamily. Homodimer or homotetramer. Heme b serves as cofactor. In terms of processing, formation of the three residue Trp-Tyr-Met cross-link is important for the catalase, but not the peroxidase activity of the enzyme.

The catalysed reaction is H2O2 + AH2 = A + 2 H2O. It catalyses the reaction 2 H2O2 = O2 + 2 H2O. Its function is as follows. Bifunctional enzyme with both catalase and broad-spectrum peroxidase activity. In Idiomarina loihiensis (strain ATCC BAA-735 / DSM 15497 / L2-TR), this protein is Catalase-peroxidase 2.